Here is a 320-residue protein sequence, read N- to C-terminus: MRSAQVYRWQIPMDAGVVLRDRRLKTRDGLYVCLCDGEREGWGEISPLPGFSQETWEEAQTALLTWVNDWLQGNEGLPEMPSVAFGASCALAELTGVLPEAADYRAAPLCTGDPDDLVLRLADMPGEKIAKVKVGLYEAVRDGMVVNLLLEAIPDLHLRLDANRAWTPLKAQQFAKYVNPDYRARIAFLEEPCKTRDDSRAFARETGIAIAWDESLREADFTFEAEEGVKAVVIKPTLTGSLDKVREQVAAAHALGLTVVISSSIESSLGLTQLARIAAWLTPGTLPGLDTLHLMQAQQVRPWPGSALPCLKRDELERLL.

Residue Lys-133 is the Proton donor of the active site. The Mg(2+) site is built by Asp-161, Glu-190, and Asp-213. Residue Lys-235 is the Proton acceptor of the active site.

It belongs to the mandelate racemase/muconate lactonizing enzyme family. MenC type 1 subfamily. Requires a divalent metal cation as cofactor.

It carries out the reaction (1R,6R)-6-hydroxy-2-succinyl-cyclohexa-2,4-diene-1-carboxylate = 2-succinylbenzoate + H2O. It functions in the pathway quinol/quinone metabolism; 1,4-dihydroxy-2-naphthoate biosynthesis; 1,4-dihydroxy-2-naphthoate from chorismate: step 4/7. Its pathway is quinol/quinone metabolism; menaquinone biosynthesis. Its function is as follows. Converts 2-succinyl-6-hydroxy-2,4-cyclohexadiene-1-carboxylate (SHCHC) to 2-succinylbenzoate (OSB). The sequence is that of o-succinylbenzoate synthase from Salmonella paratyphi B (strain ATCC BAA-1250 / SPB7).